A 641-amino-acid polypeptide reads, in one-letter code: Bifunctional protein glk (641 aa).

Residues 1–340 (MSTGAQTKAA…QLSNRTGGAS (340 aa)) are glucokinase. 23–28 (ADVGGT) contacts ATP. An HTH rpiR-type domain is found at 341-417 (SAVFERIRQM…LKLATGLTGT (77 aa)). The tract at residues 341–641 (SAVFERIRQM…SHGAAPAAKD (301 aa)) is putative HTH-type transcriptional regulator. Positions 377–396 (IVDIARKADVSQPTVIRFCR) form a DNA-binding region, H-T-H motif. The SIS domain maps to 461-600 (AIDILNNARR…AVGVAIRRAA (140 aa)). A helical membrane pass occupies residues 576-596 (SMISRILHLVMIDILAVGVAI).

It in the N-terminal section; belongs to the bacterial glucokinase family.

It is found in the membrane. It carries out the reaction D-glucose + ATP = D-glucose 6-phosphate + ADP + H(+). In Burkholderia pseudomallei (strain 1710b), this protein is Bifunctional protein glk (glk).